A 179-amino-acid chain; its full sequence is MSRIGKKPIPLPNKVTIDIKGQHIAVKGPKGSLELDLPSEVTVNQEGETVEVQRVDDSRTARERHGLFRTLVANMIQGVSQGFEKRLNIQGVGYRAQAQGSKLTLNVGYSKPVEMTMPQGINVAVENNTQVVVSGIDKEIVGNIAAKIRGVRPPEPYKGKGIRYQDEYVRRKAGKAGKK.

It belongs to the universal ribosomal protein uL6 family. Part of the 50S ribosomal subunit.

This protein binds to the 23S rRNA, and is important in its secondary structure. It is located near the subunit interface in the base of the L7/L12 stalk, and near the tRNA binding site of the peptidyltransferase center. This is Large ribosomal subunit protein uL6 from Crocosphaera subtropica (strain ATCC 51142 / BH68) (Cyanothece sp. (strain ATCC 51142)).